We begin with the raw amino-acid sequence, 150 residues long: SsrA-binding protein (150 aa).

The protein belongs to the SmpB family.

The protein localises to the cytoplasm. Its function is as follows. Required for rescue of stalled ribosomes mediated by trans-translation. Binds to transfer-messenger RNA (tmRNA), required for stable association of tmRNA with ribosomes. tmRNA and SmpB together mimic tRNA shape, replacing the anticodon stem-loop with SmpB. tmRNA is encoded by the ssrA gene; the 2 termini fold to resemble tRNA(Ala) and it encodes a 'tag peptide', a short internal open reading frame. During trans-translation Ala-aminoacylated tmRNA acts like a tRNA, entering the A-site of stalled ribosomes, displacing the stalled mRNA. The ribosome then switches to translate the ORF on the tmRNA; the nascent peptide is terminated with the 'tag peptide' encoded by the tmRNA and targeted for degradation. The ribosome is freed to recommence translation, which seems to be the essential function of trans-translation. The polypeptide is SsrA-binding protein (Borreliella burgdorferi (strain ATCC 35210 / DSM 4680 / CIP 102532 / B31) (Borrelia burgdorferi)).